A 222-amino-acid polypeptide reads, in one-letter code: Cyclin-U2-1 (222 aa).

The protein belongs to the cyclin family. Cyclin U/P subfamily. In terms of assembly, interacts with CDKA-1. In terms of tissue distribution, expressed in roots, stems and flowers. Expressed in the shoot apex, leaf primordia and young leaves.

This is Cyclin-U2-1 (CYCU2-1) from Arabidopsis thaliana (Mouse-ear cress).